The sequence spans 595 residues: Glutamyl-tRNA(Gln) amidotransferase subunit B, mitochondrial (595 aa).

A mitochondrion-targeting transit peptide spans 1 to 114 (MPRLWYSRYL…RAPTSTVAEP (114 aa)). The interval 59–78 (KEEAKRSKSQSRNGRGKKQV) is disordered.

It belongs to the GatB/GatE family. GatB subfamily. Subunit of the heterotrimeric GatCAB amidotransferase (AdT) complex, composed of A, B and C subunits.

Its subcellular location is the mitochondrion. It carries out the reaction L-glutamyl-tRNA(Gln) + L-glutamine + ATP + H2O = L-glutaminyl-tRNA(Gln) + L-glutamate + ADP + phosphate + H(+). Allows the formation of correctly charged Gln-tRNA(Gln) through the transamidation of misacylated Glu-tRNA(Gln) in the mitochondria. The reaction takes place in the presence of glutamine and ATP through an activated gamma-phospho-Glu-tRNA(Gln). In Talaromyces stipitatus (strain ATCC 10500 / CBS 375.48 / QM 6759 / NRRL 1006) (Penicillium stipitatum), this protein is Glutamyl-tRNA(Gln) amidotransferase subunit B, mitochondrial.